The sequence spans 517 residues: Cytochrome P450 monooxygenase TRI4 (517 aa).

The chain crosses the membrane as a helical span at residues alanine 15–leucine 37. Asparagine 444 carries an N-linked (GlcNAc...) asparagine glycan. Cysteine 452 provides a ligand contact to heme.

It belongs to the cytochrome P450 family. Heme is required as a cofactor.

The protein resides in the membrane. It functions in the pathway sesquiterpene biosynthesis; trichothecene biosynthesis. Functionally, cytochrome P450 monooxygenase; part of the gene cluster that mediates the production of the antimicrobial trichothecene harzianum A (HA) that plays a role in Botrytis cinerea antagonistic activity and plant defense priming. The biosynthesis of harzianum A begins with the cyclization of farnesyl diphosphate to trichodiene and is catalyzed by the trichodiene synthase TRI5. Trichodiene undergoes a series of oxygenations catalyzed by the cytochrome P450 monooxygenase TRI4. TRI4 controls the addition of 3 oxygens at C-2, C-11, and the C-12, C-13-epoxide to form the intermediate isotrichodiol. Isotrichodiol then undergoes a non-enzymatic isomerization and cyclization to form 12,13-epoxytrichothec-9-ene (EPT) which is further converted to trichodermol by the cytochrome P450 monooxygenase TRI11 via C-4 hydroxylation. The last step of HA synthesis is esterification of an octatriendioyl moiety to the C-4 oxygen of trichodermol. The octatriendioyl moiety is probably produced by the polyketide synthase TRI17 and the esterification performed by the trichothecene O-acetyltransferase TRI3. This chain is Cytochrome P450 monooxygenase TRI4, found in Trichoderma arundinaceum.